A 711-amino-acid polypeptide reads, in one-letter code: MEADGAAAAAAAGEASTEAGARPLAPEEEALRRNTDCVYFLASPLTCKKGNECDFRHSDNARMNPRDCWYWLNSNCLNPKCPFRHPPIDGMFGAPTTGMPAVSSHYAPFNSGKQLVPCYYFKKGNCLKGDRCAFYHGPQSVGNNPSEQVVKVSSLPLEQLQTQKNDLLGIKDSVQSTNSIQHGAPITNERGKTAVDRSTVNSARTATVAIPVASNAMSCPKSEKVKSSTPAALKESFTTSSGGDHPECYQNHFPMDSDPVRDWNQSYEMPPADDLPQNSREADELLGESSPGFDVLVDNDADGAAYLHDEDFGGDMYPVEDYEYAPADFDVRAHHERERFNGMDEQDQMGHMYDGYERKRRRSSERSMERPFHSERRFLQRDRDRVEMDGSDLRHRLRRRRINESSLAISPERNGEQRRRDERYRERAHGHRSHRDHHQSSRGSTLSSRLQGRIKLPGRSPDRVDTRSEKERDRRRLRDRLSPVRRTEFQGTRHREAGQHEEQTQRRSSELALGSRNADGQHLTKDVPDSHNFPHRKNSRDSSKANGSVEPEASLDFEGPKPLSVILQRKREAAWANGTSACSPKQDKSAEVSHRQASLAEAEKEGDNIISSDEYKSGSGDEEFRDEGHIPVEGHGQSSSHGDKLEAEDIIEVDPVENQDADNYDQREGESYYEPIEGQDYKSDDENAYEDDDEEYDDDDDFARKVGVVFS.

Low complexity predominate over residues 1 to 21; that stretch reads MEADGAAAAAAAGEASTEAGA. The interval 1 to 23 is disordered; sequence MEADGAAAAAAAGEASTEAGARP. 3 consecutive C3H1-type zinc fingers follow at residues 31–60, 62–88, and 112–139; these read LRRNTDCVYFLASPLTCKKGNECDFRHSDN, RMNPRDCWYWLNSNCLNPKCPFRHPPI, and GKQLVPCYYFKKGNCLKGDRCAFYHGPQ. Disordered stretches follow at residues 221 to 246, 339 to 376, 405 to 561, and 573 to 701; these read KSEKVKSSTPAALKESFTTSSGGDHP, RFNGMDEQDQMGHMYDGYERKRRRSSERSMERPFHSER, SSLA…EGPK, and AAWA…DDDD. Composition is skewed to basic and acidic residues over residues 364 to 376 and 413 to 427; these read SERSMERPFHSER and RNGEQRRRDERYRER. Over residues 428–437 the composition is skewed to basic residues; it reads AHGHRSHRDH. 2 stretches are compositionally biased toward basic and acidic residues: residues 460-509 and 585-594; these read SPDR…RRSS and KQDKSAEVSH. Composition is skewed to acidic residues over residues 648–663 and 686–701; these read EDIIEVDPVENQDADN and ENAYEDDDEEYDDDDD.

In Oryza sativa subsp. japonica (Rice), this protein is Zinc finger CCCH domain-containing protein 32.